A 210-amino-acid polypeptide reads, in one-letter code: Putative truncated L-serine dehydratase SDL1 (210 aa).

Belongs to the serine/threonine dehydratase family. Pyridoxal 5'-phosphate is required as a cofactor.

It localises to the cytoplasm. It catalyses the reaction L-serine = pyruvate + NH4(+). It participates in carbohydrate biosynthesis; gluconeogenesis. The protein is Putative truncated L-serine dehydratase SDL1 (SDL1) of Saccharomyces cerevisiae (strain ATCC 204508 / S288c) (Baker's yeast).